A 432-amino-acid polypeptide reads, in one-letter code: Alcohol acyltransferase 9 (432 aa).

Catalysis depends on proton acceptor residues H156 and D379.

It belongs to the plant acyltransferase family. As to expression, expressed in fruit.

The enzyme catalyses 2-(methylsulfanyl)acetyl-CoA + butan-1-ol = butyl 2-(methylsulfanyl)acetate + CoA. It carries out the reaction ethanol + acetyl-CoA = ethyl acetate + CoA. It catalyses the reaction butan-1-ol + acetyl-CoA = butyl acetate + CoA. The catalysed reaction is butan-1-ol + propanoyl-CoA = butyl propanoate + CoA. Involved in the biosynthesis of volatile esters which confer kiwifruit flavor. Alcohol acyl transferase that can use a wide range of alcohols as substrate to produce esters. Exhibits acetyl-CoA:alcohol O-acyltransferase activity. This chain is Alcohol acyltransferase 9, found in Actinidia deliciosa (Kiwi).